The sequence spans 607 residues: Elongation factor 4 (607 aa).

One can recognise a tr-type G domain in the interval 11 to 193 (EKIRNFSIIA…QIVEKVPAPQ (183 aa)). GTP contacts are provided by residues 23–28 (DHGKST) and 140–143 (NKID).

The protein belongs to the TRAFAC class translation factor GTPase superfamily. Classic translation factor GTPase family. LepA subfamily.

Its subcellular location is the cell membrane. The catalysed reaction is GTP + H2O = GDP + phosphate + H(+). Its function is as follows. Required for accurate and efficient protein synthesis under certain stress conditions. May act as a fidelity factor of the translation reaction, by catalyzing a one-codon backward translocation of tRNAs on improperly translocated ribosomes. Back-translocation proceeds from a post-translocation (POST) complex to a pre-translocation (PRE) complex, thus giving elongation factor G a second chance to translocate the tRNAs correctly. Binds to ribosomes in a GTP-dependent manner. This is Elongation factor 4 from Lactococcus lactis subsp. lactis (strain IL1403) (Streptococcus lactis).